A 213-amino-acid polypeptide reads, in one-letter code: Transmembrane protein 186 (213 aa).

Residues 1-79 lie on the Mitochondrial matrix side of the membrane; sequence MAALLRAVRR…FLSRLKLAQT (79 aa). The chain crosses the membrane as a helical span at residues 80-100; it reads ALTVVALPPGYYLYSQGLLTL. The Mitochondrial intermembrane segment spans residues 101-102; the sequence is NT. The chain crosses the membrane as a helical span at residues 103-123; it reads VCLMSGISGFALTMLCWMSYF. The Mitochondrial matrix portion of the chain corresponds to 124–213; the sequence is LRRLVGILYL…QVFGVHQMLK (90 aa).

The protein belongs to the TMEM186 family. As to quaternary structure, part of the mitochondrial complex I assembly/MCIA complex that comprises at least the core subunits TMEM126B, NDUFAF1, ECSIT and ACAD9 and complement subunits such as COA1 and TMEM186. Interacts with MT-ND3.

It localises to the mitochondrion inner membrane. Its function is as follows. As part of the MCIA complex, required for efficient assembly of the mitochondrial complex I. This Homo sapiens (Human) protein is Transmembrane protein 186.